The primary structure comprises 113 residues: uncharacterized protein (113 aa).

The region spanning 16–113 (TPFGYTLSLI…CEWGVKNQNN (98 aa)) is the HTH hxlR-type domain.

This is an uncharacterized protein from Halalkalibacterium halodurans (strain ATCC BAA-125 / DSM 18197 / FERM 7344 / JCM 9153 / C-125) (Bacillus halodurans).